The chain runs to 230 residues: Ribonuclease 3 (230 aa).

An RNase III domain is found at 5 to 127 (HEHLARKLGI…ILGAVLRDQG (123 aa)). Glu-40 contributes to the Mg(2+) binding site. Asp-44 is a catalytic residue. Asp-113 and Glu-116 together coordinate Mg(2+). Glu-116 is an active-site residue. Residues 154–224 (DPKTRLQELM…AENMLSRLSD (71 aa)) form the DRBM domain. Positions 202 to 230 (GEGSSRKKAEQQAAENMLSRLSDQSRFRV) are disordered.

This sequence belongs to the ribonuclease III family. Homodimer. Mg(2+) is required as a cofactor.

It is found in the cytoplasm. The enzyme catalyses Endonucleolytic cleavage to 5'-phosphomonoester.. Its function is as follows. Digests double-stranded RNA. Involved in the processing of primary rRNA transcript to yield the immediate precursors to the large and small rRNAs (23S and 16S). Processes some mRNAs, and tRNAs when they are encoded in the rRNA operon. Processes pre-crRNA and tracrRNA of type II CRISPR loci if present in the organism. This chain is Ribonuclease 3, found in Methylococcus capsulatus (strain ATCC 33009 / NCIMB 11132 / Bath).